Consider the following 280-residue polypeptide: UDP-2,3-diacylglucosamine pyrophosphatase LpxI (280 aa).

Residues Ala-12, 74-75 (NV), Gln-169, 187-188 (TD), Lys-214, and 226-233 (LPTIGVAT) contribute to the substrate site.

It belongs to the LpxI family. In terms of assembly, homodimer. The cofactor is Mg(2+).

It is found in the cell inner membrane. The catalysed reaction is UDP-2-N,3-O-bis[(3R)-3-hydroxytetradecanoyl]-alpha-D-glucosamine + H2O = 2-N,3-O-bis[(3R)-3-hydroxytetradecanoyl]-alpha-D-glucosaminyl 1-phosphate + UMP + 2 H(+). Its pathway is glycolipid biosynthesis; lipid IV(A) biosynthesis; lipid IV(A) from (3R)-3-hydroxytetradecanoyl-[acyl-carrier-protein] and UDP-N-acetyl-alpha-D-glucosamine: step 4/6. With respect to regulation, inhibited by high concentrations of Cu(2+) and Zn(2+). Completely inhibited by EDTA in vitro. Its function is as follows. Hydrolyzes the pyrophosphate bond of UDP-2,3-diacylglucosamine to form 2,3-diacylglucosamine 1-phosphate (lipid X) and UMP by catalyzing the attack of water at the beta-P atom. Involved in the biosynthesis of lipid A, a phosphorylated glycolipid that anchors the lipopolysaccharide to the outer membrane of the cell. Can functionally complement lpxH deficiency in E.coli. Cannot use CDP-diacylglycerol as substrate. In Caulobacter vibrioides (strain ATCC 19089 / CIP 103742 / CB 15) (Caulobacter crescentus), this protein is UDP-2,3-diacylglucosamine pyrophosphatase LpxI.